The chain runs to 320 residues: N-acetylneuraminate lyase (320 aa).

Residues T51 and T52 each coordinate aceneuramate. Y143 serves as the catalytic Proton donor. K173 functions as the Schiff-base intermediate with substrate in the catalytic mechanism. The aceneuramate site is built by S175, G199, D201, E202, and S218.

The protein belongs to the DapA family. NanA subfamily. As to quaternary structure, homotetramer.

It localises to the cytoplasm. The catalysed reaction is aceneuramate = aldehydo-N-acetyl-D-mannosamine + pyruvate. It functions in the pathway amino-sugar metabolism; N-acetylneuraminate degradation. Functionally, catalyzes the cleavage of N-acetylneuraminic acid (sialic acid) to form pyruvate and N-acetylmannosamine via a Schiff base intermediate. It prevents sialic acids from being recycled and returning to the cell surface. Involved in the N-glycolylneuraminic acid (Neu5Gc) degradation pathway. This is N-acetylneuraminate lyase from Rattus norvegicus (Rat).